The sequence spans 478 residues: Catalase easC (478 aa).

Residue His-54 is part of the active site. A heme-binding site is contributed by Tyr-343. Residues 459–478 (VAEKARPDSPSRAQPGQLRL) are disordered.

Belongs to the catalase family. Heme is required as a cofactor.

Its pathway is alkaloid biosynthesis; ergot alkaloid biosynthesis. Its function is as follows. Catalase; part of the gene cluster that mediates the biosynthesis of fungal ergot alkaloid. DmaW catalyzes the first step of ergot alkaloid biosynthesis by condensing dimethylallyl diphosphate (DMAP) and tryptophan to form 4-dimethylallyl-L-tryptophan. The second step is catalyzed by the methyltransferase easF that methylates 4-dimethylallyl-L-tryptophan in the presence of S-adenosyl-L-methionine, resulting in the formation of 4-dimethylallyl-L-abrine. The catalase easC and the FAD-dependent oxidoreductase easE then transform 4-dimethylallyl-L-abrine to chanoclavine-I which is further oxidized by easD in the presence of NAD(+), resulting in the formation of chanoclavine-I aldehyde. Chanoclavine-I aldehyde is the precursor of ergoamides and ergopeptines in Clavicipitaceae, and clavine-type alcaloids such as fumiclavine in Trichocomaceae. However, the metabolites downstream of chanoclavine-I aldehyde in Arthrodermataceae have not been identified yet. This chain is Catalase easC, found in Arthroderma benhamiae (strain ATCC MYA-4681 / CBS 112371) (Trichophyton mentagrophytes).